Reading from the N-terminus, the 89-residue chain is Small ribosomal subunit protein uS15 (89 aa).

Belongs to the universal ribosomal protein uS15 family. As to quaternary structure, part of the 30S ribosomal subunit. Forms a bridge to the 50S subunit in the 70S ribosome, contacting the 23S rRNA.

One of the primary rRNA binding proteins, it binds directly to 16S rRNA where it helps nucleate assembly of the platform of the 30S subunit by binding and bridging several RNA helices of the 16S rRNA. In terms of biological role, forms an intersubunit bridge (bridge B4) with the 23S rRNA of the 50S subunit in the ribosome. The polypeptide is Small ribosomal subunit protein uS15 (Prochlorococcus marinus (strain MIT 9215)).